Consider the following 209-residue polypeptide: Thymidine kinase (209 aa).

ATP is bound by residues 9–16 (SAMNAGKT) and 88–91 (DEAQ). The active-site Proton acceptor is the E89.

Belongs to the thymidine kinase family. In terms of assembly, homotetramer.

Its subcellular location is the cytoplasm. The catalysed reaction is thymidine + ATP = dTMP + ADP + H(+). This Xanthomonas oryzae pv. oryzae (strain MAFF 311018) protein is Thymidine kinase.